The chain runs to 522 residues: Cytochrome P450 26C1 (522 aa).

A helical membrane pass occupies residues Leu-9–Ala-29. Cys-459 is a heme binding site.

The protein belongs to the cytochrome P450 family. Heme is required as a cofactor. In terms of tissue distribution, detected in most tissues at very low level.

It localises to the membrane. The catalysed reaction is an organic molecule + reduced [NADPH--hemoprotein reductase] + O2 = an alcohol + oxidized [NADPH--hemoprotein reductase] + H2O + H(+). It catalyses the reaction all-trans-retinoate + reduced [NADPH--hemoprotein reductase] + O2 = all-trans-4-hydroxyretinoate + oxidized [NADPH--hemoprotein reductase] + H2O + H(+). The enzyme catalyses all-trans-4-hydroxyretinoate + reduced [NADPH--hemoprotein reductase] + O2 = all-trans-4-oxoretinoate + oxidized [NADPH--hemoprotein reductase] + 2 H2O + H(+). It carries out the reaction 9-cis-retinoate + reduced [NADPH--hemoprotein reductase] + O2 = 9-cis-4-hydroxyretinoate + oxidized [NADPH--hemoprotein reductase] + H2O + H(+). The catalysed reaction is 9-cis-4-hydroxyretinoate + reduced [NADPH--hemoprotein reductase] + O2 = 9-cis-4-oxoretinoate + oxidized [NADPH--hemoprotein reductase] + 2 H2O + H(+). It catalyses the reaction all-trans-4-hydroxy-13,14-dihydroretinoate + reduced [NADPH--hemoprotein reductase] + O2 = all-trans-4-oxo-13,14-dihydroretinoate + oxidized [NADPH--hemoprotein reductase] + 2 H2O + H(+). The enzyme catalyses all-trans-13,14-dihydroretinoate + reduced [NADPH--hemoprotein reductase] + O2 = all-trans-4-hydroxy-13,14-dihydroretinoate + oxidized [NADPH--hemoprotein reductase] + H2O + H(+). Functionally, a cytochrome P450 monooxygenase involved in the metabolism of retinoates (RAs), the active metabolites of vitamin A, and critical signaling molecules in animals. RAs exist as at least four different isomers: all-trans-RA (atRA), 9-cis-RA, 13-cis-RA, and 9,13-dicis-RA, where atRA is considered to be the biologically active isomer, although 9-cis-RA and 13-cis-RA also have activity. Catalyzes the oxidation of atRA primarily at C-4. Oxidation of atRA limits its biological activity and initiates a degradative process leading to its eventual elimination, thereby contributes to the regulation of atRA homeostasis and signaling. Able to metabolize other RAs such as 9-cis with high efficiency. Can oxidize all-trans-13,14-dihydroretinoate (DRA) to metabolites which could include all-trans-4-oxo-DRA, all-trans-4-hydroxy-DRA, all-trans-5,8-epoxy-DRA, and all-trans-18-hydroxy-DRA. Shares sequence similarity with other CYP26 family members, but has higher affinity to 9-cis-RA and is much less sensitive to the inhibitory effects of ketoconazole. In cooperation with Cyp26a1, contributes to the CNS patterning and the development of regions of higher visual acuity. This chain is Cytochrome P450 26C1 (CYP26C1), found in Homo sapiens (Human).